We begin with the raw amino-acid sequence, 201 residues long: AVYTLPELPYDYSALEPYISGEIMELHHDKHHKAYVDGANTALDKLAEARDKADFGAINKLEKDLAFNLAGHVNHSVFWKNMAPKGSAPERPTDELGAAIDEFFGSFDNMKAQFTAAATGIQGSGWASLVWDPLGKRINTLQFYDHQNNLPAGSIPLLQLDMWEHAFYLQYKNVKGDYVKSWWNVVNWDDVALRFSEARVA.

The Fe(3+) site is built by His27, His75, Asp161, and His165. Positions 27, 75, 161, and 165 each coordinate Mn(2+).

The protein belongs to the iron/manganese superoxide dismutase family. As to quaternary structure, homotetramer. Requires Mn(2+) as cofactor. Fe(3+) is required as a cofactor.

It carries out the reaction 2 superoxide + 2 H(+) = H2O2 + O2. With respect to regulation, shows decreasing activity with increasing pH. Slightly inhibited by azide and fluoride at pH 7-8; the inhibition is drastically increased towards lower pH. Functionally, destroys superoxide anion radicals which are normally produced within the cells and which are toxic to biological systems. Catalyzes the dismutation of superoxide anion radicals into O2 and H2O2 by successive reduction and oxidation of the transition metal ion at the active site. This chain is Superoxide dismutase [Mn/Fe] (sodA), found in Propionibacterium freudenreichii subsp. shermanii.